An 86-amino-acid chain; its full sequence is Large ribosomal subunit protein uL23 (86 aa).

This sequence belongs to the universal ribosomal protein uL23 family. Part of the 50S ribosomal subunit. Contacts protein L29.

In terms of biological role, binds to 23S rRNA. One of the proteins that surrounds the polypeptide exit tunnel on the outside of the ribosome. The chain is Large ribosomal subunit protein uL23 from Methanosphaera stadtmanae (strain ATCC 43021 / DSM 3091 / JCM 11832 / MCB-3).